A 126-amino-acid polypeptide reads, in one-letter code: Small ribosomal subunit protein uS13 (126 aa).

Residues 98–126 (PVRGQSTKNNARTRKGRKKTVANKKKATK) form a disordered region. The segment covering 108–126 (ARTRKGRKKTVANKKKATK) has biased composition (basic residues).

Belongs to the universal ribosomal protein uS13 family. As to quaternary structure, part of the 30S ribosomal subunit. Forms a loose heterodimer with protein S19. Forms two bridges to the 50S subunit in the 70S ribosome.

Located at the top of the head of the 30S subunit, it contacts several helices of the 16S rRNA. In the 70S ribosome it contacts the 23S rRNA (bridge B1a) and protein L5 of the 50S subunit (bridge B1b), connecting the 2 subunits; these bridges are implicated in subunit movement. Contacts the tRNAs in the A and P-sites. This chain is Small ribosomal subunit protein uS13, found in Phocaeicola vulgatus (strain ATCC 8482 / DSM 1447 / JCM 5826 / CCUG 4940 / NBRC 14291 / NCTC 11154) (Bacteroides vulgatus).